The following is a 410-amino-acid chain: Translation initiation factor 2 subunit gamma (410 aa).

Positions 9 to 202 (QAEVNIGMVG…AIEEFIPTPK (194 aa)) constitute a tr-type G domain. Positions 18-25 (GHVDHGKT) are G1. Mg(2+)-binding residues include Asp21, Thr25, Gly46, and Thr48. Residue 21-26 (DHGKTT) coordinates GTP. The segment at 46–50 (GITIK) is G2. Zn(2+) contacts are provided by Cys61, Cys64, Cys73, and Cys76. Residues 90–93 (DAPG) are G3. GTP contacts are provided by residues 145–148 (NKIE) and 180–182 (SAL). The interval 145-148 (NKIE) is G4. A G5 region spans residues 180-182 (SAL).

It belongs to the TRAFAC class translation factor GTPase superfamily. Classic translation factor GTPase family. EIF2G subfamily. Heterotrimer composed of an alpha, a beta and a gamma chain. Requires Mg(2+) as cofactor.

The enzyme catalyses GTP + H2O = GDP + phosphate + H(+). In terms of biological role, eIF-2 functions in the early steps of protein synthesis by forming a ternary complex with GTP and initiator tRNA. This chain is Translation initiation factor 2 subunit gamma, found in Thermococcus kodakarensis (strain ATCC BAA-918 / JCM 12380 / KOD1) (Pyrococcus kodakaraensis (strain KOD1)).